The sequence spans 202 residues: Large ribosomal subunit protein uL18 (202 aa).

The protein belongs to the universal ribosomal protein uL18 family. As to quaternary structure, part of the 50S ribosomal subunit. Contacts the 5S and 23S rRNAs.

Its function is as follows. This is one of the proteins that bind and probably mediate the attachment of the 5S RNA into the large ribosomal subunit, where it forms part of the central protuberance. The chain is Large ribosomal subunit protein uL18 from Methanopyrus kandleri (strain AV19 / DSM 6324 / JCM 9639 / NBRC 100938).